Consider the following 347-residue polypeptide: GMP reductase (347 aa).

Position 108–131 (108–131 (ADFIKLSEILAMSEELNFICIDIA)) interacts with NADP(+). Positions 181 and 183 each coordinate K(+). Cys-186 serves as the catalytic Thioimidate intermediate. 216–239 (IIGDGGCSCAGDVAKAFGGGADFV) contributes to the NADP(+) binding site.

This sequence belongs to the IMPDH/GMPR family. GuaC type 1 subfamily. Homotetramer.

The enzyme catalyses IMP + NH4(+) + NADP(+) = GMP + NADPH + 2 H(+). Functionally, catalyzes the irreversible NADPH-dependent deamination of GMP to IMP. It functions in the conversion of nucleobase, nucleoside and nucleotide derivatives of G to A nucleotides, and in maintaining the intracellular balance of A and G nucleotides. This is GMP reductase from Shewanella halifaxensis (strain HAW-EB4).